The sequence spans 194 residues: Glycerol-3-phosphate acyltransferase 2 (194 aa).

Transmembrane regions (helical) follow at residues 1-21, 64-84, 112-132, 135-155, and 156-173; these read MWLL…AYVV, VLAV…LAAL, LAMA…VVIF, YISL…IYFH, and RPWP…LVIY.

Belongs to the PlsY family. As to quaternary structure, probably interacts with PlsX.

The protein resides in the cell membrane. The enzyme catalyses an acyl phosphate + sn-glycerol 3-phosphate = a 1-acyl-sn-glycero-3-phosphate + phosphate. The protein operates within lipid metabolism; phospholipid metabolism. Its function is as follows. Catalyzes the transfer of an acyl group from acyl-phosphate (acyl-PO(4)) to glycerol-3-phosphate (G3P) to form lysophosphatidic acid (LPA). This enzyme utilizes acyl-phosphate as fatty acyl donor, but not acyl-CoA or acyl-ACP. This Moorella thermoacetica (strain ATCC 39073 / JCM 9320) protein is Glycerol-3-phosphate acyltransferase 2.